Reading from the N-terminus, the 259-residue chain is Eukaryotic translation initiation factor 3 subunit G-2 (259 aa).

An RRM domain is found at 179–257 (SAVRISNLSE…LILSVEWSKP (79 aa)).

It belongs to the eIF-3 subunit G family. In terms of assembly, component of the eukaryotic translation initiation factor 3 (eIF-3) complex. The eIF-3 complex interacts with pix.

It localises to the cytoplasm. In terms of biological role, RNA-binding component of the eukaryotic translation initiation factor 3 (eIF-3) complex, which is involved in protein synthesis of a specialized repertoire of mRNAs and, together with other initiation factors, stimulates binding of mRNA and methionyl-tRNAi to the 40S ribosome. The eIF-3 complex specifically targets and initiates translation of a subset of mRNAs involved in cell proliferation. This subunit can bind 18S rRNA. This is Eukaryotic translation initiation factor 3 subunit G-2 from Drosophila virilis (Fruit fly).